Reading from the N-terminus, the 400-residue chain is UDP-glucuronate:glycolipid 2-beta-glucuronosyltransferase (400 aa).

D157 (proton acceptor) is an active-site residue. Residues 230-231 (SM), 272-273 (EM), Y292, and 306-310 (MKLLQ) contribute to the UDP-alpha-D-glucuronate site. A disordered region spans residues 377 to 400 (PETRLYPHPPTAAPQLSSEAALSH). Over residues 390–400 (PQLSSEAALSH) the composition is skewed to polar residues.

It belongs to the glycosyltransferase 70 family.

The protein resides in the cell inner membrane. The catalysed reaction is alpha-D-Man-(1-&gt;3)-beta-D-Glc-(1-&gt;4)-alpha-D-Glc-1-di-trans,octa-cis-undecaprenyl diphosphate + UDP-alpha-D-glucuronate = beta-D-GlcA-(1-&gt;2)-alpha-D-Man-(1-&gt;3)-beta-D-Glc-(1-&gt;4)-alpha-D-Glc-di-trans,octa-cis-undecaprenyl diphosphate + UDP + H(+). It participates in glycan biosynthesis; xanthan biosynthesis. Functionally, catalyzes the transfer of a glucuronic acid (GlcA) residue from UDP-glucuronate to mannose-alpha-1,3-glucose-beta-1,4-glucose-P-P-polyisoprenyl to form the lipid-linked tetrasaccharide GlcA-Man-Glc(2)-PP-Pol, with a glucuronic acid-beta-mannose linkage. Is involved in the biosynthesis of the exopolysaccharide xanthan, since it catalyzes the fourth glycosylation step in the assembly of the pentasaccharide-P-P-polyisoprenyl repeating unit of xanthan. Is unable to use the trisaccharide acceptor freed from the pyrophosphate lipid moiety. Does not show specificity for the lipidic portion of the acceptor. Shows diminished activity when tested with 6-O-acetyl-mannose-alpha-1,3-glucose-beta-1,4-glucose-P-P-polyisoprenyl, a putative intermediate in the synthesis of xanthan; this could indicate that acetylation of the internal mannose takes place after the formation of the GumK product. The chain is UDP-glucuronate:glycolipid 2-beta-glucuronosyltransferase (gumK) from Xanthomonas campestris pv. campestris.